The following is a 581-amino-acid chain: Serine/threonine-protein kinase SSN3 (581 aa).

The interval 34–57 (LWSQQQQQQLLDTKGSASTSKSPM) is disordered. A compositionally biased stretch (polar residues) spans 48–57 (GSASTSKSPM). A Protein kinase domain is found at 85–475 (YEIIGYIAAG…AIDALEHEYF (391 aa)). ATP-binding positions include 91-99 (IAAGTYGKV) and Lys195. Asp298 acts as the Proton acceptor in catalysis.

The protein belongs to the protein kinase superfamily. CMGC Ser/Thr protein kinase family. CDC2/CDKX subfamily. As to quaternary structure, component of the SRB8-11 complex, a regulatory module of the Mediator complex. Mg(2+) is required as a cofactor.

Its subcellular location is the nucleus. The enzyme catalyses L-seryl-[protein] + ATP = O-phospho-L-seryl-[protein] + ADP + H(+). The catalysed reaction is L-threonyl-[protein] + ATP = O-phospho-L-threonyl-[protein] + ADP + H(+). It carries out the reaction [DNA-directed RNA polymerase] + ATP = phospho-[DNA-directed RNA polymerase] + ADP + H(+). Its function is as follows. Component of the SRB8-11 complex. The SRB8-11 complex is a regulatory module of the Mediator complex which is itself involved in regulation of basal and activated RNA polymerase II-dependent transcription. The SRB8-11 complex may be involved in the transcriptional repression of a subset of genes regulated by Mediator. It may inhibit the association of the Mediator complex with RNA polymerase II to form the holoenzyme complex. The SRB8-11 complex phosphorylates the C-terminal domain (CTD) of the largest subunit of RNA polymerase II. This chain is Serine/threonine-protein kinase SSN3 (SSN3), found in Eremothecium gossypii (strain ATCC 10895 / CBS 109.51 / FGSC 9923 / NRRL Y-1056) (Yeast).